The sequence spans 533 residues: uncharacterized protein (533 aa).

4 consecutive transmembrane segments (helical) span residues methionine 1–isoleucine 21, leucine 135–leucine 155, alanine 193–alanine 213, and leucine 472–glycine 492.

The protein resides in the cell membrane. This is an uncharacterized protein from Mycobacterium bovis (strain ATCC BAA-935 / AF2122/97).